Reading from the N-terminus, the 222-residue chain is PLASMODESMATA CALLOSE-BINDING PROTEIN 4 (222 aa).

A signal peptide spans 1 to 19 (MSVLLPLCLIISMFTYSNA). Cys22 and Cys83 are oxidised to a cystine. Positions 88 to 187 (AASPSTTPPS…SVFPGTTLGP (100 aa)) are enriched in low complexity. A disordered region spans residues 88–199 (AASPSTTPPS…SGGLGDPNAG (112 aa)). A lipid anchor (GPI-anchor amidated asparagine) is attached at Asn197. A propeptide spans 198-222 (AGEKLSVRTNTVVFLLTGVAAMLVI) (removed in mature form).

Contains two additional disulfide bonds.

It is found in the cell membrane. The protein localises to the cell junction. Its subcellular location is the plasmodesma. This chain is PLASMODESMATA CALLOSE-BINDING PROTEIN 4 (PDCB4), found in Arabidopsis thaliana (Mouse-ear cress).